The following is a 636-amino-acid chain: Polyadenylate-binding protein 1 (636 aa).

Methionine 1 bears the N-acetylmethionine mark. 4 RRM domains span residues 11-89 (ASLY…WSQR), 99-175 (GNIF…RFKS), 191-268 (TNVY…RAQK), and 294-370 (VNLY…LAQR). A CSDE1-binding region spans residues 166–289 (RKVFVGRFKS…FEQMKQDRIT (124 aa)). The residue at position 299 (lysine 299) is an N6-methyllysine. Phosphoserine is present on serine 315. Threonine 319 carries the post-translational modification Phosphothreonine. Arginine 385, arginine 419, arginine 432, and arginine 436 each carry omega-N-methylarginine. An omega-N-methylated arginine; by CARM1 mark is found at arginine 455 and arginine 460. 2 positions are modified to omega-N-methylarginine: arginine 475 and arginine 481. The residue at position 493 (arginine 493) is an Asymmetric dimethylarginine; alternate. Dimethylated arginine; alternate is present on arginine 493. Residue arginine 493 is modified to Omega-N-methylarginine; alternate. At arginine 506 the chain carries Omega-N-methylarginine. Residue lysine 512 is modified to N6-acetyllysine. Arginine 518 bears the Omega-N-methylarginine mark. The PABC domain occupies 542 to 619 (QEPLTASMLA…AVAVLQAHQA (78 aa)).

The protein belongs to the polyadenylate-binding protein type-1 family. As to quaternary structure, may form homodimers. Component of a multisubunit autoregulatory ribonucleoprotein complex (ARC), at least composed of IGF2BP1, PABPC1 and CSDE1. Directly interacts with IGF2BP1. Part of a complex associated with the FOS mCRD domain and consisting of HNRPD, SYNCRIP, PAIP1 and CSDE1/UNR. Interacts with PAIP1 and PAIP2 (via the PABPC1-interacting motifs PAM1 and PAM2). Interacts with PAIP1 with a 1:1 stoichiometry and with PAIP2 with a 1:2 stoichiometry. The interaction with CSDE1 is direct and RNA-independent. Found in a mRNP complex with YBX2. Interacts with TENT2/GLD2. Identified in the spliceosome C complex. Identified in a mRNP complex, at least composed of DHX9, DDX3X, ELAVL1, HNRNPU, IGF2BP1, ILF3, PABPC1, PCBP2, PTBP2, STAU1, STAU2, SYNCRIP and YBX1. The interaction with DDX3X is direct and RNA-independent. This interaction increases in stressed cells and decreases during cell recovery. Identified in a IGF2BP1-dependent mRNP granule complex containing untranslated mRNAs. Interacts with NXF1/TAP. Interacts with PIWIL1. Interacts with AGO1, AGO2, GSPT1 and GSPT2. Interacts with LARP4B. Interacts (via the second and third RRM domains and the C-terminus) with PAIP2B (via central acidic portion and C-terminus). Forms a complex with LARP1 and SHFL. Interacts with LARP4. Interacts with ZFC3H1 in a RNase-sensitive manner. Interacts with TRIM71 (via NHL repeats) in an RNA-dependent manner. Interacts with TENT5C; the interaction has no effect on TENT5C poly(A) polymerase function. Interacts with G3BP1 and G3BP2. Interacts with ENDOV; the interaction is RNA-dependent and stimulates ENDOV activity. Interacts with UPF1; the interaction is RNA-dependent. Interacts with IGF2BP2 and IGF2BP3. May interact with SETX. Interacts with RBM46. Interacts with PAN3. Post-translationally, phosphorylated by MAPKAPK2. Methylated by CARM1. Arg-493 is dimethylated, probably to asymmetric dimethylarginine.

The protein localises to the cytoplasm. It is found in the stress granule. It localises to the nucleus. The protein resides in the cell projection. Its subcellular location is the lamellipodium. Functionally, binds the poly(A) tail of mRNA, including that of its own transcript, and regulates processes of mRNA metabolism such as pre-mRNA splicing and mRNA stability. Its function in translational initiation regulation can either be enhanced by PAIP1 or repressed by PAIP2. Can probably bind to cytoplasmic RNA sequences other than poly(A) in vivo. Binds to N6-methyladenosine (m6A)-containing mRNAs and contributes to MYC stability by binding to m6A-containing MYC mRNAs. Involved in translationally coupled mRNA turnover. Implicated with other RNA-binding proteins in the cytoplasmic deadenylation/translational and decay interplay of the FOS mRNA mediated by the major coding-region determinant of instability (mCRD) domain. Involved in regulation of nonsense-mediated decay (NMD) of mRNAs containing premature stop codons; for the recognition of premature termination codons (PTC) and initiation of NMD a competitive interaction between UPF1 and PABPC1 with the ribosome-bound release factors is proposed. By binding to long poly(A) tails, may protect them from uridylation by ZCCHC6/ZCCHC11 and hence contribute to mRNA stability. This Bos taurus (Bovine) protein is Polyadenylate-binding protein 1 (PABPC1).